The sequence spans 563 residues: Solute carrier family 22 member 1 (563 aa).

At 1-21 the chain is on the cytoplasmic side; sequence MLTVDDVLEQVGEFGWFQKQT. The helical transmembrane segment at 22–42 threads the bilayer; the sequence is FLILCLLSAAFAPIYVGIVFL. The Extracellular segment spans residues 43–144; that stretch reads AFTPDHRCRS…LVCDDSWKVD (102 aa). Residue Asn-71 is glycosylated (N-linked (GlcNAc...) asparagine). Residues 145–165 traverse the membrane as a helical segment; sequence LFQSCVNLGFFLGSLGVGYIA. Residues 166–171 lie on the Cytoplasmic side of the membrane; the sequence is DRFGRK. Residues 172 to 192 traverse the membrane as a helical segment; the sequence is VCLLATTLTCASLGVLTAVAP. The Extracellular segment spans residues 193 to 196; that stretch reads DYTS. The chain crosses the membrane as a helical span at residues 197-219; the sequence is LLIFRLLQGLVSKGSWTAGYTLI. The Cytoplasmic segment spans residues 220–232; that stretch reads TEFVGLGYRRTVA. The chain crosses the membrane as a helical span at residues 233 to 253; it reads ILYQMAFTVGLVLLSGLAYIL. Residues 254–257 are Extracellular-facing; the sequence is PHWR. The chain crosses the membrane as a helical span at residues 258 to 278; sequence WLQLAVSLPIFLLLFRFWFVP. The short motif at 278 to 282 is the Proline-rich sequence element; the sequence is PESPR. Residues 279 to 342 lie on the Cytoplasmic side of the membrane; that stretch reads ESPRWLLSQK…FRTPNLRKYT (64 aa). A Phosphoserine modification is found at Ser-328. Residues 343–363 form a helical membrane-spanning segment; it reads FILMYLWFTSSVVYQGLIMHV. The Extracellular portion of the chain corresponds to 364-371; that stretch reads GATGGNLY. Residues 372-392 form a helical membrane-spanning segment; that stretch reads LDFLYSALVEFPAGFIILVTI. Residues 393–398 are Cytoplasmic-facing; sequence DRFGRR. Residues 399–418 form a helical membrane-spanning segment; the sequence is YPLATSNLAAGLACFLMIFI. At 419–423 the chain is on the extracellular side; that stretch reads PHDLP. The chain crosses the membrane as a helical span at residues 424-446; it reads WLNIMVACVGRMGITIVFQMVCL. At 447 to 459 the chain is on the cytoplasmic side; the sequence is VNAELFPTFIRNL. Residues 460-480 form a helical membrane-spanning segment; the sequence is GMMVCSSLCDLGGVLTPFLVF. Residues 481 to 487 lie on the Extracellular side of the membrane; that stretch reads RLMEVWQ. Residues 488-508 form a helical membrane-spanning segment; the sequence is GSPLILFAALGLVAGGMTLLL. Topologically, residues 509-563 are cytoplasmic; it reads PETKGVTLPETIEDAENLQRKAKPKENKIYLQVQTSELNTQAAERDASQGTAQQK.

It belongs to the major facilitator (TC 2.A.1) superfamily. Organic cation transporter (TC 2.A.1.19) family. Post-translationally, phosphorylated.

The protein localises to the basolateral cell membrane. It is found in the apical cell membrane. The protein resides in the lateral cell membrane. It localises to the basal cell membrane. Its subcellular location is the cell membrane. The enzyme catalyses 1-methylnicotinamide(out) = 1-methylnicotinamide(in). It carries out the reaction dopamine(out) = dopamine(in). The catalysed reaction is serotonin(out) = serotonin(in). It catalyses the reaction (R)-adrenaline(out) = (R)-adrenaline(in). The enzyme catalyses (R)-noradrenaline(out) = (R)-noradrenaline(in). It carries out the reaction histamine(out) = histamine(in). The catalysed reaction is guanidine(out) = guanidine(in). It catalyses the reaction choline(out) = choline(in). The enzyme catalyses acetylcholine(in) = acetylcholine(out). It carries out the reaction thiamine(in) = thiamine(out). The catalysed reaction is spermidine(in) = spermidine(out). It catalyses the reaction agmatine(out) = agmatine(in). The enzyme catalyses putrescine(out) = putrescine(in). It carries out the reaction (R)-carnitine(in) = (R)-carnitine(out). The catalysed reaction is O-isobutanoyl-(R)-carnitine(in) = O-isobutanoyl-(R)-carnitine(out). It catalyses the reaction O-acetyl-(R)-carnitine(in) = O-acetyl-(R)-carnitine(out). The enzyme catalyses O-3-hydroxybutanoyl-(R)-carnitine(in) = O-3-hydroxybutanoyl-(R)-carnitine(out). It carries out the reaction O-propanoyl-(R)-carnitine(in) = O-propanoyl-(R)-carnitine(out). The catalysed reaction is O-butanoyl-(R)-carnitine(in) = O-butanoyl-(R)-carnitine(out). It catalyses the reaction O-2-methylbutanoyl-(R)-carnitine(in) = O-2-methylbutanoyl-(R)-carnitine(out). The enzyme catalyses O-3-methylbutanoyl-(R)-carnitine(in) = O-3-methylbutanoyl-(R)-carnitine(out). It carries out the reaction O-hexanoyl-(R)-carnitine(in) = O-hexanoyl-(R)-carnitine(out). The catalysed reaction is L-histidyl-L-proline diketopiperazine(in) = L-histidyl-L-proline diketopiperazine(out). It catalyses the reaction (R)-salsolinol(in) = (R)-salsolinol(out). The enzyme catalyses prostaglandin F2alpha(out) = prostaglandin F2alpha(in). It carries out the reaction prostaglandin E2(out) = prostaglandin E2(in). Its activity is regulated as follows. Phosphorylation of the transporter leads to changes in its substrate affinity, resulting in a regulation of the transport activity. In contrast with rat ortholog, ASP uptake is inhibited by protein kinase A (PKA) and C (PKC) activation. ASP uptake is also endogenously activated by calmodulin, the calmodulin-dependent kinase II and LCK tyrosine kinase. Inhibited by cGMP, most likely through a cGMP-binding protein that interacts with OCT1. In terms of biological role, electrogenic voltage-dependent transporter that mediates the transport of a variety of organic cations such as endogenous bioactive amines, cationic drugs and xenobiotics. Functions as a pH- and Na(+)-independent, bidirectional transporter. Cation cellular uptake or release is driven by the electrochemical potential (i.e. membrane potential and concentration gradient) and substrate selectivity. Hydrophobicity is a major requirement for recognition in polyvalent substrates and inhibitors. Primarily expressed in the basolateral membrane of hepatocytes and proximal tubules and involved in the uptake and disposition of cationic compounds from the blood by hepatic and renal clearance. Most likely functions as an uptake carrier in enterocytes contributing to the intestinal elimination of organic cations from the systemic circulation. Transports endogenous monoamines such as N-1-methylnicotinamide (NMN), guanidine, neurotransmitters dopamine, serotonin, noradrenaline, adrenaline and histamine, and quaternary ammonium compound such as choline. Also transports natural polyamines such as spermidine, agmatine and putrescine at low affinity, but relatively high turnover. Involved in the hepatic and intestinal uptake of the vitamin B1/thiamine, hence regulating hepatic lipid and energy metabolism. Contributes to the influx and efflux of fatty acid carriers carnitines and acylcarnitines across the basolateral membrane of hepatocytes, from the liver to the systemic circulation and inversely and may be involved in regulating the systemic availability of hepatic acylcarnitines. Also capable of transporting non-amine endogenous compounds such as prostaglandin E2 (PGE2) and prostaglandin F2-alpha (PGF2-alpha). May contribute to the transport of cationic compounds in testes across the blood-testis-barrier. Also mediates the uptake of xenobiotics tributylmethylammonium (TBuMA), quinidine, N-methyl-quinine (NMQ), N-methyl-quinidine (NMQD) N-(4,4-azo-n-pentyl)-quinuclidine (APQ), azidoprocainamide methoiodide (AMP), N-(4,4-azo-n-pentyl)-21-deoxyajmalinium (APDA) and 4-(4-(dimethylamino)styryl)-N-methylpyridinium (ASP). In Bos taurus (Bovine), this protein is Solute carrier family 22 member 1 (SLC22A1).